The following is a 276-amino-acid chain: Protein G1 (276 aa).

Disordered regions lie at residues 1–30 (MSSS…SQKR) and 178–213 (SYHK…ATAP). Basic and acidic residues predominate over residues 21-30 (RPSRYESQKR). In terms of domain architecture, ALOG spans 24-183 (RYESQKRRDW…ARGISYHKKK (160 aa)). Residues 178–187 (SYHKKKKRRG) show a composition bias toward basic residues. Residues 181–185 (KKKKR) carry the Nuclear localization signal motif. Positions 189–202 (NMNGARGGGGGGAR) are enriched in gly residues. Over residues 203 to 213 (AGVNDGDATAP) the composition is skewed to low complexity.

Belongs to the plant homeotic and developmental regulators ALOG protein family. As to expression, expressed at the empty glumes of immature spikelets, which are lemmas of the sterile florets located at the lateral side of the spikelet, throughout their development.

It is found in the nucleus. Its function is as follows. Probable transcription regulator that acts as a developmental regulator by promoting cell growth in response to light. Transcription regulator that restrains empty glumes growth, lemmas of the sterile florets located at the lateral side of the rice spikelet, to maintain their small size, probably by repressing lemma identity via transcription regulation. The protein is Protein G1 (G1) of Oryza sativa subsp. japonica (Rice).